A 600-amino-acid chain; its full sequence is Mitoguardin 1 (600 aa).

Transmembrane regions (helical) follow at residues 15 to 32 (TYAV…YSLS) and 38 to 58 (PVAK…IFLA). Ser-257 and Ser-261 each carry phosphoserine.

The protein belongs to the mitoguardin family. As to quaternary structure, homodimer and heterodimer; forms heterodimers with MIGA2. Interacts with PLD6/MitoPLD.

It localises to the mitochondrion outer membrane. Functionally, regulator of mitochondrial fusion. Acts by forming homo- and heterodimers at the mitochondrial outer membrane and facilitating the formation of PLD6/MitoPLD dimers. May act by regulating phospholipid metabolism via PLD6/MitoPLD. This is Mitoguardin 1 from Mus musculus (Mouse).